A 168-amino-acid polypeptide reads, in one-letter code: Siroheme decarboxylase NirH subunit (168 aa).

This sequence belongs to the Ahb/Nir family. In terms of assembly, probably forms a complex composed of NirD, NirL, NirG and NirH. All proteins are required for the total conversion of siroheme to didecarboxysiroheme.

The catalysed reaction is siroheme + 2 H(+) = 12,18-didecarboxysiroheme + 2 CO2. It participates in porphyrin-containing compound metabolism. In terms of biological role, involved in heme d1 biosynthesis. Catalyzes the decarboxylation of siroheme into didecarboxysiroheme. This chain is Siroheme decarboxylase NirH subunit, found in Stutzerimonas stutzeri (Pseudomonas stutzeri).